The following is a 351-amino-acid chain: Photosystem II D2 protein (351 aa).

The helical transmembrane segment at 39–59 (CAYMAIGGWLTGTTFATSWYT) threads the bilayer. Residue His116 coordinates chlorophyll a. The chain crosses the membrane as a helical span at residues 123 to 139 (GFMLRQFEIARLVGVRP). Gln128 and Asn141 together coordinate pheophytin a. A helical membrane pass occupies residues 151–164 (LFVSVFLIYPLGQS). Residue His196 participates in chlorophyll a binding. Residues 206–226 (GALLCAIHGATVENTLFEDGD) traverse the membrane as a helical segment. 2 residues coordinate a plastoquinone: His213 and Phe260. His213 contacts Fe cation. Fe cation is bound at residue His267. Residues 277–293 (GLWMSAIGVVGLALNLR) traverse the membrane as a helical segment.

Belongs to the reaction center PufL/M/PsbA/D family. PSII is composed of 1 copy each of membrane proteins PsbA, PsbB, PsbC, PsbD, PsbE, PsbF, PsbH, PsbI, PsbJ, PsbK, PsbL, PsbM, PsbT, PsbX, PsbY, PsbZ, Psb30/Ycf12, peripheral proteins PsbO, CyanoQ (PsbQ), PsbU, PsbV and a large number of cofactors. It forms dimeric complexes. The D1/D2 heterodimer binds P680, chlorophylls that are the primary electron donor of PSII, and subsequent electron acceptors. It shares a non-heme iron and each subunit binds pheophytin, quinone, additional chlorophylls, carotenoids and lipids. There is also a Cl(-1) ion associated with D1 and D2, which is required for oxygen evolution. The PSII complex binds additional chlorophylls, carotenoids and specific lipids. is required as a cofactor.

Its subcellular location is the cellular thylakoid membrane. The catalysed reaction is 2 a plastoquinone + 4 hnu + 2 H2O = 2 a plastoquinol + O2. In terms of biological role, photosystem II (PSII) is a light-driven water:plastoquinone oxidoreductase that uses light energy to abstract electrons from H(2)O, generating O(2) and a proton gradient subsequently used for ATP formation. It consists of a core antenna complex that captures photons, and an electron transfer chain that converts photonic excitation into a charge separation. The D1/D2 (PsbA/PsbD) reaction center heterodimer binds P680, the primary electron donor of PSII as well as several subsequent electron acceptors. D2 is needed for assembly of a stable PSII complex. This Prochlorothrix hollandica protein is Photosystem II D2 protein.